A 474-amino-acid chain; its full sequence is tRNA modification GTPase MnmE (474 aa).

(6S)-5-formyl-5,6,7,8-tetrahydrofolate contacts are provided by Arg25, Glu82, and Lys123. In terms of domain architecture, TrmE-type G spans 219–386; it reads GIKVVIAGKP…LKKHLYDSAM (168 aa). Residue Asn229 participates in K(+) binding. GTP contacts are provided by residues 229 to 234, 248 to 254, and 273 to 276; these read NAGKSS, SNISGTT, and DTAG. Ser233 is a binding site for Mg(2+). Positions 248, 250, and 253 each coordinate K(+). Thr254 is a binding site for Mg(2+). Position 474 (Lys474) interacts with (6S)-5-formyl-5,6,7,8-tetrahydrofolate.

Belongs to the TRAFAC class TrmE-Era-EngA-EngB-Septin-like GTPase superfamily. TrmE GTPase family. In terms of assembly, homodimer. Heterotetramer of two MnmE and two MnmG subunits. K(+) serves as cofactor.

It localises to the cytoplasm. In terms of biological role, exhibits a very high intrinsic GTPase hydrolysis rate. Involved in the addition of a carboxymethylaminomethyl (cmnm) group at the wobble position (U34) of certain tRNAs, forming tRNA-cmnm(5)s(2)U34. This chain is tRNA modification GTPase MnmE, found in Blochmanniella floridana.